A 713-amino-acid chain; its full sequence is Macrophage-expressed gene 1 protein (713 aa).

Positions 1–19 (MNSFMALVLIWMIIACAEA) are cleaved as a signal peptide. Residues 30–345 (GFQICKNALK…TAVRHYYTFN (316 aa)) form the MACPF domain. A disulfide bridge links Cys-34 with Cys-70. Beta stranded transmembrane passes span 113–120 (LSINTELA) and 127–132 (GKFSTE). Residue Asn-185 is glycosylated (N-linked (GlcNAc...) asparagine). 2 beta stranded membrane passes run 235–244 (TVTASAGIAF) and 248–256 (VNFKVETDY). Residue Asn-269 is glycosylated (N-linked (GlcNAc...) asparagine). Cys-350 and Cys-369 are oxidised to a cystine. Residue Asn-375 is glycosylated (N-linked (GlcNAc...) asparagine). 5 disulfides stabilise this stretch: Cys-385/Cys-394, Cys-432/Cys-446, Cys-436/Cys-442, Cys-531/Cys-569, and Cys-554/Cys-574. Residues 410-653 (PPGYSPVHLL…GDSNGMSGGE (244 aa)) are P2. Residues 654-674 (AAGITLGVTIALGIVITLAIY) traverse the membrane as a helical segment.

This sequence belongs to the MPEG1 family. As to quaternary structure, homooligomer; predominantly forms a homooligomeric arc-shaped pore complex instead of complete rings of 16 subunits. Post-translationally, proteolytically processed in two steps to generate the Macrophage-expressed gene 1 protein, processed form: cleaved by trypsin in proximity of the helical transmembrane domain releases the ectodomain into the lysosomal lumen to orient the pore-forming domain toward the endogenous membranes, and processed by the asparagine endopeptidase (LGMN). Proteolytic processing in antigen-containing vesicles is pH-dependent. Monoubiquitinated in response to bacterial infection; ubiquitination is required for vesicular localization and antibacterial activity and can be blocked by bacterial cell cycle inhibiting factor (cif). Expressed constitutively in a variety of cell types including macrophages, microglia, neutrophils, T cells, marginal zone B cells, keratinocytes, splenocytes and intestinal epithelial cells.

The protein localises to the cytoplasmic vesicle membrane. It is found in the cytoplasmic vesicle. It localises to the phagosome membrane. Its activity is regulated as follows. Forms arc- and ring-shaped pre-pores on top of the membrane at neutral to slightly acidic pH conditions and converts to pores upon acidification. Undergoes transition from the pre-pore to the pore in a processive clockwise hand-over-hand process. In the pore state, 2 alpha-helical regions refold into transmembrane hairpins (TMH1 and TMH2) in each protomer that form in the ensemble complex giant beta-barrel transmembrane pores. In terms of biological role, pore-forming protein involved in both innate and adaptive immunity. Plays a central role in antigen cross-presentation in dendritic cells by forming a pore in antigen-containing compartments, thereby promoting delivery of antigens for cross-presentation. Also involved in innate immune response following bacterial infection; shows antibacterial activity against a wide spectrum of Gram-positive, Gram-negative and acid-fast bacteria. Reduces the viability of the intracytosolic pathogen L.monocytogenes by inhibiting acidification of the phagocytic vacuole of host cells which restricts bacterial translocation from the vacuole to the cytosol. Required for the antibacterial activity of reactive oxygen species and nitric oxide. Its function is as follows. Pore-forming protein that plays a central role in antigen cross-presentation in dendritic cells by mediating delivery of antigens for cross-presentation. Dendritic cells bridge innate and adaptive immunity by capturing exogenous antigens on MHC class-I molecules and presenting them to naive CD8(+) T-cells. Acts by forming a pore in antigen-containing compartments, promoting the release of antigens into the cytosol, enabling generation of MHCI:peptide complexes and T-cell priming. The sequence is that of Macrophage-expressed gene 1 protein from Mus musculus (Mouse).